A 357-amino-acid polypeptide reads, in one-letter code: F-box only protein 25 (357 aa).

The interaction with beta-actin stretch occupies residues 1-83 (MPFLGQDWRS…DTAAHSFYRE (83 aa)). Positions 224 to 271 (GLTLSDLPLHMLNNILYRFSDGWDIVTLGQVTPTLYMLSEDRRLWKRL) constitute an F-box domain.

In terms of assembly, part of a SCF (SKP1-cullin-F-box) protein ligase complex consisting of FBXO25, SKP1, CUL1 and RBX1. Interacts directly with SKP1 and CUL1. Interacts (via C-terminus) with actin (via N-terminus).

The protein localises to the nucleus. It functions in the pathway protein modification; protein ubiquitination. Substrate-recognition component of the SCF (SKP1-CUL1-F-box protein)-type E3 ubiquitin ligase complex. May play a role in accumulation of expanded polyglutamine (polyQ) protein huntingtin (HTT). This is F-box only protein 25 (Fbxo25) from Rattus norvegicus (Rat).